Consider the following 465-residue polypeptide: Phosphatidylserine synthase 1 (465 aa).

At 1–35 the chain is on the cytoplasmic side; the sequence is MVSAMRSRTLSKDDVNYKMHFRMINEQQVEDITID. Residues 36–56 form a helical membrane-spanning segment; sequence FFYKPHTITLLTFTTVSLMYF. The Lumenal portion of the chain corresponds to 57-68; that stretch reads AFTRENTSQEDN. Residues 69-89 form a helical membrane-spanning segment; it reads IWKGILSVIFFFLIISVLAFP. Residues 90–102 are Cytoplasmic-facing; sequence NGPFTRPHPAIWR. Residues 103 to 123 traverse the membrane as a helical segment; the sequence is MVFGLSVLYFLFLVFLLFLNV. The Lumenal portion of the chain corresponds to 124–186; sequence EQVKAVMYWL…AMKALLIRSY (63 aa). Residues 187–207 form a helical membrane-spanning segment; it reads GLCWTISITWEMTELFFMHLL. At 208–216 the chain is on the cytoplasmic side; it reads PNFAECWWD. A helical membrane pass occupies residues 217–237; it reads QVILDILLCNGGGILLGMVVC. Topologically, residues 238–286 are lumenal; that stretch reads RFLEMRTYHWASFKDIHTTTGKIKRAVLQFTPASWIYVRWFDPKSSFQR. A helical membrane pass occupies residues 287 to 307; the sequence is VAGVYLFMIIWQLTELNTFFL. Topologically, residues 308 to 319 are cytoplasmic; it reads KHIFVFQASHPL. A helical transmembrane segment spans residues 320–342; it reads SWCRILFIGIITAPTVRQYYAYL. The Lumenal portion of the chain corresponds to 343–355; the sequence is TDTQCKRVGTQCW. The helical transmembrane segment at 356 to 376 threads the bilayer; the sequence is VFGAIAFLEATVCIKFGQDLF. Topologically, residues 377–383 are cytoplasmic; the sequence is SKTHLLY. The helical transmembrane segment at 384 to 404 threads the bilayer; that stretch reads VFLWLFSVAVITFLCLYGMVW. Topologically, residues 405–465 are lumenal; that stretch reads YADYCGQREK…GKVTNGVGKK (61 aa). Residues 440–465 are disordered; the sequence is PVKQNEGTSRRKNRHKGKVTNGVGKK. Basic residues predominate over residues 449 to 465; sequence RRKNRHKGKVTNGVGKK.

The protein belongs to the phosphatidyl serine synthase family.

Its subcellular location is the endoplasmic reticulum membrane. The enzyme catalyses a 1,2-diacyl-sn-glycero-3-phosphoethanolamine + L-serine = a 1,2-diacyl-sn-glycero-3-phospho-L-serine + ethanolamine. It carries out the reaction a 1,2-diacyl-sn-glycero-3-phosphocholine + L-serine = a 1,2-diacyl-sn-glycero-3-phospho-L-serine + choline. It functions in the pathway phospholipid metabolism; phosphatidylserine biosynthesis. Functionally, catalyzes a base-exchange reaction in which the polar head group of phosphatidylethanolamine (PE) or phosphatidylcholine (PC) is replaced by L-serine. Catalyzes mainly the conversion of phosphatidylcholine but also converts, in vitro and to a lesser extent, phosphatidylethanolamine. The protein is Phosphatidylserine synthase 1 (ptdss1) of Xenopus tropicalis (Western clawed frog).